Here is a 113-residue protein sequence, read N- to C-terminus: Endoribonuclease SymE (113 aa).

The 46-residue stretch at 29-74 folds into the SpoVT-AbrB domain; that stretch reads SRYPDYSRIPAITLKGQWLEAAGFATGTAVDVKVMEGCIVLTAQPA.

It belongs to the SymE family.

It localises to the cytoplasm. Involved in the degradation and recycling of damaged RNA. It is itself a target for degradation by the ATP-dependent protease Lon. The sequence is that of Endoribonuclease SymE from Shigella flexneri serotype 5b (strain 8401).